We begin with the raw amino-acid sequence, 411 residues long: Lissencephaly-1 homolog (411 aa).

A LisH domain is found at 9–41 (QREELNQAIADYLGTNGYADSLEAFRKEADLST). Positions 56-83 (TSVIRLQKKVMELEAKLTEAEKEVIEGA) form a coiled coil. WD repeat units follow at residues 106–147 (GHRA…RTLK), 148–187 (GHTD…ECVK), 191–230 (GHDH…CVKT), 233–272 (GHRE…CKVE), 275–334 (DHEH…CLLT), 337–376 (GHDN…CMKT), and 379–411 (AHQH…WECR).

The protein belongs to the WD repeat LIS1/nudF family.

It is found in the cytoplasm. It localises to the cytoskeleton. Its subcellular location is the microtubule organizing center. The protein resides in the centrosome. Functionally, positively regulates the activity of the minus-end directed microtubule motor protein dynein. May enhance dynein-mediated microtubule sliding by targeting dynein to the microtubule plus end. Required for several dynein- and microtubule-dependent processes. This Drosophila grimshawi (Hawaiian fruit fly) protein is Lissencephaly-1 homolog.